A 212-amino-acid polypeptide reads, in one-letter code: Urease accessory protein UreG (212 aa).

Residue 11 to 18 (GPVGSGKT) participates in GTP binding.

The protein belongs to the SIMIBI class G3E GTPase family. UreG subfamily. As to quaternary structure, homodimer. UreD, UreF and UreG form a complex that acts as a GTP-hydrolysis-dependent molecular chaperone, activating the urease apoprotein by helping to assemble the nickel containing metallocenter of UreC. The UreE protein probably delivers the nickel.

The protein localises to the cytoplasm. Facilitates the functional incorporation of the urease nickel metallocenter. This process requires GTP hydrolysis, probably effectuated by UreG. This chain is Urease accessory protein UreG, found in Trichodesmium erythraeum (strain IMS101).